The primary structure comprises 323 residues: tRNA U34 carboxymethyltransferase (323 aa).

Carboxy-S-adenosyl-L-methionine-binding positions include lysine 91, tryptophan 105, lysine 110, glycine 130, 152 to 154 (DPT), 181 to 182 (IE), methionine 196, tyrosine 200, and arginine 315.

The protein belongs to the class I-like SAM-binding methyltransferase superfamily. CmoB family. As to quaternary structure, homotetramer.

It catalyses the reaction carboxy-S-adenosyl-L-methionine + 5-hydroxyuridine(34) in tRNA = 5-carboxymethoxyuridine(34) in tRNA + S-adenosyl-L-homocysteine + H(+). Functionally, catalyzes carboxymethyl transfer from carboxy-S-adenosyl-L-methionine (Cx-SAM) to 5-hydroxyuridine (ho5U) to form 5-carboxymethoxyuridine (cmo5U) at position 34 in tRNAs. This chain is tRNA U34 carboxymethyltransferase, found in Escherichia coli O157:H7.